A 364-amino-acid polypeptide reads, in one-letter code: tRNA 2-selenouridine synthase (364 aa).

The 124-residue stretch at 14–137 (LIADTPIIDV…LRQTAIQATI (124 aa)) folds into the Rhodanese domain. Cys-97 functions as the S-selanylcysteine intermediate in the catalytic mechanism.

The protein belongs to the SelU family. In terms of assembly, monomer.

It catalyses the reaction 5-methylaminomethyl-2-thiouridine(34) in tRNA + selenophosphate + (2E)-geranyl diphosphate + H2O + H(+) = 5-methylaminomethyl-2-selenouridine(34) in tRNA + (2E)-thiogeraniol + phosphate + diphosphate. The enzyme catalyses 5-methylaminomethyl-2-thiouridine(34) in tRNA + (2E)-geranyl diphosphate = 5-methylaminomethyl-S-(2E)-geranyl-thiouridine(34) in tRNA + diphosphate. The catalysed reaction is 5-methylaminomethyl-S-(2E)-geranyl-thiouridine(34) in tRNA + selenophosphate + H(+) = 5-methylaminomethyl-2-(Se-phospho)selenouridine(34) in tRNA + (2E)-thiogeraniol. It carries out the reaction 5-methylaminomethyl-2-(Se-phospho)selenouridine(34) in tRNA + H2O = 5-methylaminomethyl-2-selenouridine(34) in tRNA + phosphate. Functionally, involved in the post-transcriptional modification of the uridine at the wobble position (U34) of tRNA(Lys), tRNA(Glu) and tRNA(Gln). Catalyzes the conversion of 2-thiouridine (S2U-RNA) to 2-selenouridine (Se2U-RNA). Acts in a two-step process involving geranylation of 2-thiouridine (S2U) to S-geranyl-2-thiouridine (geS2U) and subsequent selenation of the latter derivative to 2-selenouridine (Se2U) in the tRNA chain. This Escherichia coli O17:K52:H18 (strain UMN026 / ExPEC) protein is tRNA 2-selenouridine synthase.